A 211-amino-acid chain; its full sequence is ATP phosphoribosyltransferase (211 aa).

The protein belongs to the ATP phosphoribosyltransferase family. Short subfamily. As to quaternary structure, heteromultimer composed of HisG and HisZ subunits.

The protein localises to the cytoplasm. The catalysed reaction is 1-(5-phospho-beta-D-ribosyl)-ATP + diphosphate = 5-phospho-alpha-D-ribose 1-diphosphate + ATP. It functions in the pathway amino-acid biosynthesis; L-histidine biosynthesis; L-histidine from 5-phospho-alpha-D-ribose 1-diphosphate: step 1/9. Its function is as follows. Catalyzes the condensation of ATP and 5-phosphoribose 1-diphosphate to form N'-(5'-phosphoribosyl)-ATP (PR-ATP). Has a crucial role in the pathway because the rate of histidine biosynthesis seems to be controlled primarily by regulation of HisG enzymatic activity. This is ATP phosphoribosyltransferase from Bacillus cereus (strain G9842).